A 204-amino-acid chain; its full sequence is Thymidine kinase (204 aa).

ATP-binding positions include 18 to 25 (GSMFSGKT) and 91 to 94 (DEGQ). The Proton acceptor role is filled by E92. Zn(2+) is bound by residues C148, C151, C180, and H183.

Belongs to the thymidine kinase family. Homotetramer.

Its subcellular location is the cytoplasm. It catalyses the reaction thymidine + ATP = dTMP + ADP + H(+). This is Thymidine kinase from Bdellovibrio bacteriovorus (strain ATCC 15356 / DSM 50701 / NCIMB 9529 / HD100).